Consider the following 95-residue polypeptide: Co-chaperonin GroES (95 aa).

This sequence belongs to the GroES chaperonin family. In terms of assembly, heptamer of 7 subunits arranged in a ring. Interacts with the chaperonin GroEL.

Its subcellular location is the cytoplasm. Its function is as follows. Together with the chaperonin GroEL, plays an essential role in assisting protein folding. The GroEL-GroES system forms a nano-cage that allows encapsulation of the non-native substrate proteins and provides a physical environment optimized to promote and accelerate protein folding. GroES binds to the apical surface of the GroEL ring, thereby capping the opening of the GroEL channel. In Glaesserella parasuis serovar 5 (strain SH0165) (Haemophilus parasuis), this protein is Co-chaperonin GroES.